A 597-amino-acid polypeptide reads, in one-letter code: Elongation factor 4 (597 aa).

In terms of domain architecture, tr-type G spans 2-184 (DHIRNFSIIA…ALVAKVPPPK (183 aa)). GTP-binding positions include 14 to 19 (DHGKST) and 131 to 134 (NKID).

Belongs to the TRAFAC class translation factor GTPase superfamily. Classic translation factor GTPase family. LepA subfamily.

The protein resides in the cell inner membrane. It catalyses the reaction GTP + H2O = GDP + phosphate + H(+). In terms of biological role, required for accurate and efficient protein synthesis under certain stress conditions. May act as a fidelity factor of the translation reaction, by catalyzing a one-codon backward translocation of tRNAs on improperly translocated ribosomes. Back-translocation proceeds from a post-translocation (POST) complex to a pre-translocation (PRE) complex, thus giving elongation factor G a second chance to translocate the tRNAs correctly. Binds to ribosomes in a GTP-dependent manner. The chain is Elongation factor 4 from Paraburkholderia xenovorans (strain LB400).